A 329-amino-acid polypeptide reads, in one-letter code: Chlorophyllase-1, chloroplastic (329 aa).

The N-terminal 21 residues, 1 to 21 (MAAMVDSKPAASVQGTPLLAT), are a transit peptide targeting the chloroplast. Positions 145-149 (GHSRG) match the GXSXG motif. Catalysis depends on Ser-147, which acts as the Nucleophile. Catalysis depends on charge relay system residues Asp-169 and His-242.

Belongs to the AB hydrolase superfamily. Lipase family.

The protein localises to the plastid. Its subcellular location is the chloroplast. It catalyses the reaction a chlorophyll + H2O = a chlorophyllide + phytol + H(+). It functions in the pathway porphyrin-containing compound metabolism; chlorophyll degradation. Its function is as follows. Catalyzes the hydrolysis of ester bond in chlorophyll to yield chlorophyllide and phytol. The polypeptide is Chlorophyllase-1, chloroplastic (Citrus unshiu (Satsuma mandarin)).